Here is a 635-residue protein sequence, read N- to C-terminus: 1-deoxy-D-xylulose-5-phosphate synthase (635 aa).

Thiamine diphosphate is bound by residues His77 and 118-120; that span reads GHA. Asp150 is a Mg(2+) binding site. Thiamine diphosphate-binding positions include 151–152, Asn179, Tyr290, and Glu372; that span reads AS. Position 179 (Asn179) interacts with Mg(2+).

The protein belongs to the transketolase family. DXPS subfamily. Homodimer. It depends on Mg(2+) as a cofactor. Thiamine diphosphate is required as a cofactor.

The enzyme catalyses D-glyceraldehyde 3-phosphate + pyruvate + H(+) = 1-deoxy-D-xylulose 5-phosphate + CO2. The protein operates within metabolic intermediate biosynthesis; 1-deoxy-D-xylulose 5-phosphate biosynthesis; 1-deoxy-D-xylulose 5-phosphate from D-glyceraldehyde 3-phosphate and pyruvate: step 1/1. Its function is as follows. Catalyzes the acyloin condensation reaction between C atoms 2 and 3 of pyruvate and glyceraldehyde 3-phosphate to yield 1-deoxy-D-xylulose-5-phosphate (DXP). This is 1-deoxy-D-xylulose-5-phosphate synthase from Leptospira borgpetersenii serovar Hardjo-bovis (strain JB197).